A 668-amino-acid polypeptide reads, in one-letter code: E3 ubiquitin-protein ligase RNF139 (668 aa).

Residue Ala-2 is modified to N-acetylalanine. 11 helical membrane passes run 51–71 (IGLQ…VLIL), 85–105 (AFLL…HIDF), 125–145 (SLWM…VTLL), 154–174 (LMIL…PLHI), 178–198 (VVLM…AVKL), 293–313 (GMSA…LAFI), 323–343 (LGFV…LSGL), 356–376 (MCLL…PVLM), 390–410 (FPVL…SYVL), 420–440 (LFAV…SLTV), and 470–490 (IIEF…MMFE). The RING-type; atypical zinc-finger motif lies at 547–586 (CAICYHEFTTSARITPCNHYFHALCLRKWLYIQDTCPMCH). The segment at 602–668 (SNNNGFIAPN…AAAEFNDDTD (67 aa)) is disordered. Over residues 618 to 630 (EALREDAAGSDRE) the composition is skewed to basic and acidic residues. The segment covering 631–641 (LNEDDSTDCDD) has biased composition (acidic residues). A Phosphoserine modification is found at Ser-636. Thr-637 and Thr-667 each carry phosphothreonine.

In terms of assembly, interacts with VHL. Interacts with MHC class I and HM13. Component of SCAP-SREBP complex composed of SREBF2, SCAP and RNF139; the complex hampers the interaction between SCAP and SEC24B, thereby reducing SREBF2 proteolytic processing. Interacts with SREBF2 (via C-terminal domain). Interacts with SCAP; the interaction inhibits the interaction of SCAP with SEC24B and hampering the ER to Golgi transport of the SCAP-SREBP complex. Interacts with SEC24B. Interacts with INSIG1 and INSIG2. Interacts with EIF3F and EIF3H; the interaction leads to protein translation inhibitions in a ubiquitination-dependent manner. Interacts with XBP1 isoform 1; the interaction induces ubiquitination and degradation of XBP1 isoform 1. Interacts with AUP1, AMFR and UBE2G2; interaction with AUP1 facilitates interaction of RNF139 with ubiquitin-conjugating enzyme UBE2G2 and ubiquitin ligase AMFR/gp78, leading to sterol-induced ubiquitination of HMGCR and its subsequent proteasomal degradation. Autoubiquitinated. Ubiquitination is induced by sterol and leads to ist degradation via the ubiquitin-proteasome pathway.

It is found in the endoplasmic reticulum membrane. The enzyme catalyses S-ubiquitinyl-[E2 ubiquitin-conjugating enzyme]-L-cysteine + [acceptor protein]-L-lysine = [E2 ubiquitin-conjugating enzyme]-L-cysteine + N(6)-ubiquitinyl-[acceptor protein]-L-lysine.. Its pathway is protein modification; protein ubiquitination. Functionally, E3-ubiquitin ligase; acts as a negative regulator of cell proliferation through mechanisms involving G2/M arrest and cell death. Required for MHC class I ubiquitination in cells expressing the cytomegalovirus protein US2 before dislocation from the endoplasmic reticulum (ER). Affects SREBP processing by hindering the SREBP-SCAP complex translocation from the ER to the Golgi, thereby reducing SREBF2 target gene expression. Involved in the sterol-accelerated degradation of HMGCR. This is achieved through binding to INSIG1 and/or INSIG2 at the ER membrane. In addition, interaction of RNF139 with AUP1 facilitates interaction of RNF139 with ubiquitin-conjugating enzyme UBE2G2 and ubiquitin ligase AMFR, leading to ubiquitination of HMGCR. The ubiquitinated HMGCR is then released from the ER by the complex into the cytosol for subsequent destruction. Required for INSIG1 ubiquitination. May be required for EIF3 complex ubiquitination. The chain is E3 ubiquitin-protein ligase RNF139 from Mus musculus (Mouse).